A 182-amino-acid polypeptide reads, in one-letter code: Adenine phosphoribosyltransferase (182 aa).

This sequence belongs to the purine/pyrimidine phosphoribosyltransferase family. Homodimer.

Its subcellular location is the cytoplasm. The catalysed reaction is AMP + diphosphate = 5-phospho-alpha-D-ribose 1-diphosphate + adenine. The protein operates within purine metabolism; AMP biosynthesis via salvage pathway; AMP from adenine: step 1/1. Catalyzes a salvage reaction resulting in the formation of AMP, that is energically less costly than de novo synthesis. The chain is Adenine phosphoribosyltransferase from Streptomyces avermitilis (strain ATCC 31267 / DSM 46492 / JCM 5070 / NBRC 14893 / NCIMB 12804 / NRRL 8165 / MA-4680).